A 584-amino-acid chain; its full sequence is Insulin-like growth factor 2 mRNA-binding protein 3 (584 aa).

2 consecutive RRM domains span residues 2-75 (NKLY…HSVP) and 81-156 (RKLQ…YIPD). The segment at 160–199 (AQQPPQQHPQGRRGFGQRGPPRQGSPSATTRQKPQSDVPL) is disordered. Polar residues predominate over residues 184–194 (SPSATTRQKPQ). KH domains follow at residues 196–261 (DVPL…CKII), 277–344 (EIPL…EEEI), 409–474 (SETV…QGRI), and 491–557 (KLEA…QRKI).

This sequence belongs to the RRM IMP/VICKZ family. In terms of assembly, homodimer and multimer.

The protein localises to the cytoplasm. It localises to the nucleus. The protein resides in the P-body. Its subcellular location is the stress granule. In terms of biological role, RNA-binding factor that may recruit target transcripts to cytoplasmic protein-RNA complexes (mRNPs). This transcript 'caging' into mRNPs allows mRNA transport and transient storage. It also modulates the rate and location at which target transcripts encounter the translational apparatus and shields them from endonuclease attacks or microRNA-mediated degradation. Preferentially binds to N6-methyladenosine (m6A)-containing mRNAs and increases their stability. This is Insulin-like growth factor 2 mRNA-binding protein 3 (IGF2BP3) from Gallus gallus (Chicken).